The following is a 367-amino-acid chain: Glutamate 5-kinase (367 aa).

Residue Lys10 coordinates ATP. Substrate contacts are provided by Ser50, Asp137, and Asn149. ATP-binding positions include 169–170 (TD) and 211–217 (TGGMATK). Residues 275–353 (AGELVVDDGA…QQIGEILGYE (79 aa)) enclose the PUA domain.

The protein belongs to the glutamate 5-kinase family.

The protein localises to the cytoplasm. It catalyses the reaction L-glutamate + ATP = L-glutamyl 5-phosphate + ADP. It participates in amino-acid biosynthesis; L-proline biosynthesis; L-glutamate 5-semialdehyde from L-glutamate: step 1/2. Its function is as follows. Catalyzes the transfer of a phosphate group to glutamate to form L-glutamate 5-phosphate. This chain is Glutamate 5-kinase, found in Erwinia tasmaniensis (strain DSM 17950 / CFBP 7177 / CIP 109463 / NCPPB 4357 / Et1/99).